A 162-amino-acid polypeptide reads, in one-letter code: COP9 signalosome complex subunit 9 (162 aa).

One can recognise a PCI domain in the interval 6–118 (ETIKSLEDPY…SVSKSMKFSR (113 aa)).

Component of a COP9 signalosome-like (CSN) complex, composed of at least RRI1/CSN5, CSN9, RRI2/CSN10, PCI8/CSN11, CSN12 and CSI1. In the complex, it probably interacts directly with CSN12 and CSI1. Also interacts with RPN5.

It localises to the cytoplasm. It is found in the nucleus. Functionally, component of the COP9 signalosome (CSN) complex that acts as a regulator of the ubiquitin (Ubl) conjugation pathway by mediating the deneddylation of the cullin subunit of SCF-type E3 ubiquitin-protein ligase complexes. The CSN complex is involved in the regulation of the mating pheromone response. The protein is COP9 signalosome complex subunit 9 (CSN9) of Saccharomyces cerevisiae (strain ATCC 204508 / S288c) (Baker's yeast).